The primary structure comprises 667 residues: Bifunctional polymyxin resistance protein ArnA (667 aa).

The tract at residues 1–304 is formyltransferase ArnAFT; it reads MKAIVFAYHD…EMGIVTDVRL (304 aa). H104 acts as the Proton donor; for formyltransferase activity in catalysis. (6R)-10-formyltetrahydrofolate is bound by residues R114 and 136–140; that span reads VKKAD. Residues 314–667 are dehydrogenase ArnADH; the sequence is RRTRVLILGV…TAAPKDELNA (354 aa). NAD(+)-binding positions include D347 and 368–369; that span reads DI. Residues A393, Y398, and 432–433 each bind UDP-alpha-D-glucuronate; that span reads TS. E434 serves as the catalytic Proton acceptor; for decarboxylase activity. UDP-alpha-D-glucuronate contacts are provided by residues R460, N492, 526-535, and Y613; that span reads KLVDGGAQKR. R619 functions as the Proton donor; for decarboxylase activity in the catalytic mechanism.

It in the N-terminal section; belongs to the Fmt family. UDP-L-Ara4N formyltransferase subfamily. In the C-terminal section; belongs to the NAD(P)-dependent epimerase/dehydratase family. UDP-glucuronic acid decarboxylase subfamily. As to quaternary structure, homohexamer, formed by a dimer of trimers.

It carries out the reaction UDP-alpha-D-glucuronate + NAD(+) = UDP-beta-L-threo-pentopyranos-4-ulose + CO2 + NADH. The catalysed reaction is UDP-4-amino-4-deoxy-beta-L-arabinose + (6R)-10-formyltetrahydrofolate = UDP-4-deoxy-4-formamido-beta-L-arabinose + (6S)-5,6,7,8-tetrahydrofolate + H(+). It functions in the pathway nucleotide-sugar biosynthesis; UDP-4-deoxy-4-formamido-beta-L-arabinose biosynthesis; UDP-4-deoxy-4-formamido-beta-L-arabinose from UDP-alpha-D-glucuronate: step 1/3. It participates in nucleotide-sugar biosynthesis; UDP-4-deoxy-4-formamido-beta-L-arabinose biosynthesis; UDP-4-deoxy-4-formamido-beta-L-arabinose from UDP-alpha-D-glucuronate: step 3/3. The protein operates within bacterial outer membrane biogenesis; lipopolysaccharide biosynthesis. Bifunctional enzyme that catalyzes the oxidative decarboxylation of UDP-glucuronic acid (UDP-GlcUA) to UDP-4-keto-arabinose (UDP-Ara4O) and the addition of a formyl group to UDP-4-amino-4-deoxy-L-arabinose (UDP-L-Ara4N) to form UDP-L-4-formamido-arabinose (UDP-L-Ara4FN). The modified arabinose is attached to lipid A and is required for resistance to polymyxin and cationic antimicrobial peptides. The protein is Bifunctional polymyxin resistance protein ArnA of Yersinia pseudotuberculosis serotype O:3 (strain YPIII).